A 155-amino-acid chain; its full sequence is Small ribosomal subunit protein uS9 (155 aa).

This sequence belongs to the universal ribosomal protein uS9 family.

This Sinorhizobium medicae (strain WSM419) (Ensifer medicae) protein is Small ribosomal subunit protein uS9.